We begin with the raw amino-acid sequence, 186 residues long: Peptide deformylase 2 (186 aa).

Fe cation contacts are provided by Cys104 and His146. The active site involves Glu147. His150 is a Fe cation binding site.

This sequence belongs to the polypeptide deformylase family. Fe(2+) is required as a cofactor.

It catalyses the reaction N-terminal N-formyl-L-methionyl-[peptide] + H2O = N-terminal L-methionyl-[peptide] + formate. Functionally, removes the formyl group from the N-terminal Met of newly synthesized proteins. Requires at least a dipeptide for an efficient rate of reaction. N-terminal L-methionine is a prerequisite for activity but the enzyme has broad specificity at other positions. The sequence is that of Peptide deformylase 2 from Streptomyces avermitilis (strain ATCC 31267 / DSM 46492 / JCM 5070 / NBRC 14893 / NCIMB 12804 / NRRL 8165 / MA-4680).